Consider the following 296-residue polypeptide: Small ribosomal subunit protein uS2 (296 aa).

The segment at 252-296 is disordered; the sequence is TSSKTVSKLKQSKKLSKTQNIDEETNTEFDQALGGACENNNSDNT.

Belongs to the universal ribosomal protein uS2 family.

In Rickettsia prowazekii (strain Madrid E), this protein is Small ribosomal subunit protein uS2 (rpsB).